A 150-amino-acid chain; its full sequence is 3-dehydroquinate dehydratase (150 aa).

Y26 acts as the Proton acceptor in catalysis. Substrate contacts are provided by N77, H83, and D90. The Proton donor role is filled by H103. Residues 104 to 105 and R114 each bind substrate; that span reads LS.

Belongs to the type-II 3-dehydroquinase family. In terms of assembly, homododecamer.

The enzyme catalyses 3-dehydroquinate = 3-dehydroshikimate + H2O. The protein operates within metabolic intermediate biosynthesis; chorismate biosynthesis; chorismate from D-erythrose 4-phosphate and phosphoenolpyruvate: step 3/7. In terms of biological role, catalyzes a trans-dehydration via an enolate intermediate. This is 3-dehydroquinate dehydratase from Citrobacter koseri (strain ATCC BAA-895 / CDC 4225-83 / SGSC4696).